The sequence spans 369 residues: Methylthioribose-1-phosphate isomerase (369 aa).

Residues 54–56 (RGA), Arg95, and Gln208 each bind substrate. Catalysis depends on Asp249, which acts as the Proton donor. A substrate-binding site is contributed by 259–260 (NK).

This sequence belongs to the eIF-2B alpha/beta/delta subunits family. MtnA subfamily.

The catalysed reaction is 5-(methylsulfanyl)-alpha-D-ribose 1-phosphate = 5-(methylsulfanyl)-D-ribulose 1-phosphate. The protein operates within amino-acid biosynthesis; L-methionine biosynthesis via salvage pathway; L-methionine from S-methyl-5-thio-alpha-D-ribose 1-phosphate: step 1/6. Its function is as follows. Catalyzes the interconversion of methylthioribose-1-phosphate (MTR-1-P) into methylthioribulose-1-phosphate (MTRu-1-P). In Desulfatibacillum aliphaticivorans, this protein is Methylthioribose-1-phosphate isomerase.